The sequence spans 371 residues: tRNA-specific 2-thiouridylase MnmA (371 aa).

ATP contacts are provided by residues 13–20 (GMSGGVDS) and M39. The segment at 99–101 (NPD) is interaction with target base in tRNA. C104 serves as the catalytic Nucleophile. C104 and C200 are disulfide-bonded. G128 is an ATP binding site. The interval 150-152 (KDQ) is interaction with tRNA. The active-site Cysteine persulfide intermediate is the C200. The interaction with tRNA stretch occupies residues 308 to 309 (RY).

This sequence belongs to the MnmA/TRMU family.

Its subcellular location is the cytoplasm. The catalysed reaction is S-sulfanyl-L-cysteinyl-[protein] + uridine(34) in tRNA + AH2 + ATP = 2-thiouridine(34) in tRNA + L-cysteinyl-[protein] + A + AMP + diphosphate + H(+). In terms of biological role, catalyzes the 2-thiolation of uridine at the wobble position (U34) of tRNA, leading to the formation of s(2)U34. This chain is tRNA-specific 2-thiouridylase MnmA, found in Listeria monocytogenes serotype 4b (strain CLIP80459).